A 302-amino-acid chain; its full sequence is Sulfate adenylyltransferase subunit 2 (302 aa).

Belongs to the PAPS reductase family. CysD subfamily. As to quaternary structure, heterodimer composed of CysD, the smaller subunit, and CysN.

The enzyme catalyses sulfate + ATP + H(+) = adenosine 5'-phosphosulfate + diphosphate. The protein operates within sulfur metabolism; hydrogen sulfide biosynthesis; sulfite from sulfate: step 1/3. With CysN forms the ATP sulfurylase (ATPS) that catalyzes the adenylation of sulfate producing adenosine 5'-phosphosulfate (APS) and diphosphate, the first enzymatic step in sulfur assimilation pathway. APS synthesis involves the formation of a high-energy phosphoric-sulfuric acid anhydride bond driven by GTP hydrolysis by CysN coupled to ATP hydrolysis by CysD. In Yersinia enterocolitica serotype O:8 / biotype 1B (strain NCTC 13174 / 8081), this protein is Sulfate adenylyltransferase subunit 2.